A 78-amino-acid chain; its full sequence is Large ribosomal subunit protein bL28 (78 aa).

It belongs to the bacterial ribosomal protein bL28 family.

In Clavibacter michiganensis subsp. michiganensis (strain NCPPB 382), this protein is Large ribosomal subunit protein bL28.